We begin with the raw amino-acid sequence, 641 residues long: Anthrax toxin receptor-like (641 aa).

The N-terminal stretch at 1–27 (MMSHSPSMPCSALFLLLLLLLPPTFKG) is a signal peptide. The Extracellular portion of the chain corresponds to 28-363 (GSLRYHGPGW…ASQGIVFKRT (336 aa)). One can recognise a VWFA domain in the interval 76–247 (DLYLVLDKSG…SALEGVVDPL (172 aa)). Ser-84, Ser-86, and Thr-150 together coordinate a divalent metal cation. Residues 364-384 (WLMFLPVLLVTLLLLCCTWKL) form a helical membrane-spanning segment. Residues 385-641 (CIKPKKLPPP…FPPISKGPKF (257 aa)) are Cytoplasmic-facing. The interval 391–455 (LPPPPPKPEK…ARPPPAPLPA (65 aa)) is disordered. Residues 407–436 (PPPSSPPAPGRGPGPGPSAGPGPGPGPSPG) are compositionally biased toward pro residues.

This sequence belongs to the ATR family.

The protein resides in the membrane. In Mus musculus (Mouse), this protein is Anthrax toxin receptor-like (Antxrl).